Consider the following 324-residue polypeptide: NADH-quinone oxidoreductase subunit H (324 aa).

8 helical membrane passes run 11–31 (ILIT…CGAF), 81–101 (VIFT…FAIV), 114–134 (IGIL…LFAG), 154–174 (VSYE…AGSF), 186–206 (LWNV…GVAV), 237–257 (FFVG…TLFF), 265–285 (LPPF…FILI), and 304–324 (VCLP…LYNA).

This sequence belongs to the complex I subunit 1 family. NDH-1 is composed of 13 different subunits. Subunits NuoA, H, J, K, L, M, N constitute the membrane sector of the complex.

The protein resides in the cell inner membrane. It catalyses the reaction a quinone + NADH + 5 H(+)(in) = a quinol + NAD(+) + 4 H(+)(out). In terms of biological role, NDH-1 shuttles electrons from NADH, via FMN and iron-sulfur (Fe-S) centers, to quinones in the respiratory chain. The immediate electron acceptor for the enzyme in this species is believed to be ubiquinone. Couples the redox reaction to proton translocation (for every two electrons transferred, four hydrogen ions are translocated across the cytoplasmic membrane), and thus conserves the redox energy in a proton gradient. This subunit may bind ubiquinone. This chain is NADH-quinone oxidoreductase subunit H, found in Pectobacterium atrosepticum (strain SCRI 1043 / ATCC BAA-672) (Erwinia carotovora subsp. atroseptica).